The following is a 379-amino-acid chain: Beta sliding clamp (379 aa).

Belongs to the beta sliding clamp family. In terms of assembly, forms a ring-shaped head-to-tail homodimer around DNA which binds and tethers DNA polymerases and other proteins to the DNA. The DNA replisome complex has a single clamp-loading complex (3 tau and 1 each of delta, delta', psi and chi subunits) which binds 3 Pol III cores (1 core on the leading strand and 2 on the lagging strand) each with a beta sliding clamp dimer. Additional proteins in the replisome are other copies of gamma, psi and chi, Ssb, DNA helicase and RNA primase.

It is found in the cytoplasm. Confers DNA tethering and processivity to DNA polymerases and other proteins. Acts as a clamp, forming a ring around DNA (a reaction catalyzed by the clamp-loading complex) which diffuses in an ATP-independent manner freely and bidirectionally along dsDNA. Initially characterized for its ability to contact the catalytic subunit of DNA polymerase III (Pol III), a complex, multichain enzyme responsible for most of the replicative synthesis in bacteria; Pol III exhibits 3'-5' exonuclease proofreading activity. The beta chain is required for initiation of replication as well as for processivity of DNA replication. The chain is Beta sliding clamp (dnaN) from Rickettsia felis (strain ATCC VR-1525 / URRWXCal2) (Rickettsia azadi).